A 265-amino-acid polypeptide reads, in one-letter code: PBSX phage terminase small subunit (265 aa).

The segment at 241–265 is disordered; sequence KQKAEKTDDSQEPIEIMIKRKERKS.

The protein to B.subtilis YqaS and B.subtilis phage SPP1 terminase small subunit. Dimer of a small and a large subunit.

Functionally, functions as a terminase. This is PBSX phage terminase small subunit (xtmA) from Bacillus subtilis (strain 168).